A 358-amino-acid polypeptide reads, in one-letter code: Ion-translocating oxidoreductase complex subunit D (358 aa).

4 helical membrane passes run 19–39 (IMLW…YYFG), 41–61 (GVVL…FIAI), 79–99 (LTAL…VIII), and 125–145 (IGYV…MPPI). At threonine 186 the chain carries FMN phosphoryl threonine. 5 helical membrane-spanning segments follow: residues 220–240 (FAQG…FLIL), 248–268 (IPVA…FTGF), 271–291 (LSAI…FIAT), 297–317 (SITP…VYLI), and 321–341 (GNYP…VPLI).

It belongs to the NqrB/RnfD family. In terms of assembly, the complex is composed of six subunits: RnfA, RnfB, RnfC, RnfD, RnfE and RnfG. FMN is required as a cofactor.

The protein localises to the cell inner membrane. In terms of biological role, part of a membrane-bound complex that couples electron transfer with translocation of ions across the membrane. The sequence is that of Ion-translocating oxidoreductase complex subunit D from Haemophilus influenzae (strain PittGG).